The following is a 614-amino-acid chain: Probable ATP-dependent RNA helicase DDX5 (614 aa).

A compositionally biased stretch (basic and acidic residues) spans 1–15 (MSGYSSDRDRGRDRG). The segment at 1-39 (MSGYSSDRDRGRDRGFGAPRFGGSRAGPLSGKKFGNPGE) is disordered. Position 24 is a phosphoserine (Ser-24). N6-acetyllysine; alternate is present on Lys-32. Lys-32 participates in a covalent cross-link: Glycyl lysine isopeptide (Lys-Gly) (interchain with G-Cter in SUMO2); alternate. Residues Lys-33 and Lys-40 each carry the N6-acetyllysine modification. A Glycyl lysine isopeptide (Lys-Gly) (interchain with G-Cter in SUMO2) cross-link involves residue Lys-45. Lys-53 is covalently cross-linked (Glycyl lysine isopeptide (Lys-Gly) (interchain with G-Cter in SUMO2); alternate). Residue Lys-53 forms a Glycyl lysine isopeptide (Lys-Gly) (interchain with G-Cter in SUMO); alternate linkage. Lys-53 is covalently cross-linked (Glycyl lysine isopeptide (Lys-Gly) (interchain with G-Cter in SUMO1); alternate). Positions 94 to 122 (LNFYEANFPANVMDVIARQNFTEPTAIQA) match the Q motif motif. Residues 114 to 116 (FTE), Gln-121, and 138 to 145 (AQTGSGKT) contribute to the ATP site. In terms of domain architecture, Helicase ATP-binding spans 125–300 (WPVALSGLDM…EDFLKDYIHI (176 aa)). At Lys-236 the chain carries N6-acetyllysine. The DEAD box motif lies at 248-251 (DEAD). Tyr-297 carries the phosphotyrosine modification. The region spanning 328–475 (KLIRLMEEIM…AINPKLLQLV (148 aa)) is the Helicase C-terminal domain. Residues Lys-340, Lys-343, Lys-388, Lys-391, Lys-411, Lys-437, Lys-451, and Lys-470 each participate in a glycyl lysine isopeptide (Lys-Gly) (interchain with G-Cter in SUMO2) cross-link. The interval 477–504 (DRGSGRSRGRGGMKDDRRDRYSAGKRGG) is disordered. The transactivation domain stretch occupies residues 477–614 (DRGSGRSRGR…GYPMPTGYSQ (138 aa)). Ser-480 is modified (phosphoserine). Over residues 488 to 498 (GMKDDRRDRYS) the composition is skewed to basic and acidic residues. Ser-520 bears the Phosphoserine mark. A Glycyl lysine isopeptide (Lys-Gly) (interchain with G-Cter in SUMO2) cross-link involves residue Lys-523.

Belongs to the DEAD box helicase family. DDX5/DBP2 subfamily. In terms of assembly, identified in the spliceosome C complex. Component of a ribonucleoprotein complex containing mRNAs and RNA-binding proteins including DDX5, HNRNPH2 and SRSF1 as well as splicing regulator ARVCF. Interacts with RBM4; the interaction occurs in an RNA-independent manner. Interacts with AGO1 and AGO2. Interacts with ESR1, AR, EP300, CREBBP, POLR2A, TP53, RUNX2 and HDAC1. Self-associates. Interacts with DDX17. Interacts with BRDT. The large PER complex involved in the repression of transcriptional termination is composed of at least PER2, CDK9, DDX5, DHX9, NCBP1 and POLR2A (active). Interacts with DHX36; this interaction occurs in a RNA-dependent manner. Interacts with NUPR1. Interacts with ERCC6. Interacts with DDX3X in the cytoplasm; this interaction may be more efficient when both proteins are unphosphorylated. Arg-502 is dimethylated, probably to asymmetric dimethylarginine. Post-translationally, sumoylated; sumoylation, promoted by PIAS1, promotes interaction with HDAC1 and transcriptional repression activity. Sumoylation also significantly increases stability, and reduces polyubiquitination. In terms of processing, polyubiquitinated, leading to proteasomal degradation. Weakly phosphorylated in the G1/S phase of the cell cycle and much more at G2/M, especially at Thr and Tyr residues.

The protein localises to the nucleus. The protein resides in the nucleolus. Its subcellular location is the nucleus speckle. It is found in the cytoplasm. It catalyses the reaction ATP + H2O = ADP + phosphate + H(+). Functionally, involved in the alternative regulation of pre-mRNA splicing; its RNA helicase activity is necessary for increasing tau exon 10 inclusion and occurs in a RBM4-dependent manner. Binds to the tau pre-mRNA in the stem-loop region downstream of exon 10. The rate of ATP hydrolysis is highly stimulated by single-stranded RNA. Involved in transcriptional regulation; the function is independent of the RNA helicase activity. Transcriptional coactivator for androgen receptor AR but probably not ESR1. Synergizes with DDX17 and SRA1 RNA to activate MYOD1 transcriptional activity and involved in skeletal muscle differentiation. Transcriptional coactivator for p53/TP53 and involved in p53/TP53 transcriptional response to DNA damage and p53/TP53-dependent apoptosis. Transcriptional coactivator for RUNX2 and involved in regulation of osteoblast differentiation. Acts as a transcriptional repressor in a promoter-specific manner; the function probably involves association with histone deacetylases, such as HDAC1. As component of a large PER complex is involved in the inhibition of 3' transcriptional termination of circadian target genes such as PER1 and NR1D1 and the control of the circadian rhythms. In Homo sapiens (Human), this protein is Probable ATP-dependent RNA helicase DDX5 (DDX5).